Consider the following 390-residue polypeptide: uncharacterized protein (390 aa).

A run of 12 helical transmembrane segments spans residues 4–24, 40–60, 68–88, 98–118, 130–150, 159–179, 205–225, 236–256, 273–293, 295–315, 329–349, and 356–376; these read IWLFFSVMFVIGTDTFLLSPL, GWMVSAYALGYALFAFIAGPI, TVMLWGLAGFIVSTFLCGIAP, FAAGVSAAFVTPQIWASIPVI, IATAGLAASQMLGLPIGGFLA, FVLSACSLILLLILAAVMPGI, VILLAYFLFQTGNFASFSFLG, VSQIGAAMLVLGLGNMLGSLI, GMLLMGALYFALPFFPNLFLV, AGFFLTFFTAGIIFPLMMGVF, LSNAAMYAGTTVGTSIAGFLY, and GAVTGFTAILFILSMTLYQTI.

The protein belongs to the major facilitator superfamily.

It is found in the cell membrane. This is an uncharacterized protein from Bacillus subtilis (strain 168).